The following is a 62-amino-acid chain: Toxin Tb2-II (62 aa).

The LCN-type CS-alpha/beta domain maps to 1–62; the sequence is KEGYAMDHEG…KVWDYATNKC (62 aa). Disulfide bonds link Cys11–Cys62, Cys15–Cys38, Cys23–Cys43, and Cys27–Cys45.

It belongs to the long (4 C-C) scorpion toxin superfamily. Sodium channel inhibitor family. Beta subfamily. In terms of tissue distribution, expressed by the venom gland.

The protein resides in the secreted. Beta toxins bind voltage-independently at site-4 of sodium channels (Nav) and shift the voltage of activation toward more negative potentials thereby affecting sodium channel activation and promoting spontaneous and repetitive firing. This toxin is active against both mammals and insects. This chain is Toxin Tb2-II, found in Tityus bahiensis (Brazilian scorpion).